A 340-amino-acid chain; its full sequence is MYG1 protein C27H6.8 (340 aa).

It belongs to the MYG1 family.

This Caenorhabditis elegans protein is MYG1 protein C27H6.8.